A 265-amino-acid polypeptide reads, in one-letter code: Mlc titration factor A (265 aa).

Residues His111, His148, His152, and Glu211 each coordinate Zn(2+).

The protein belongs to the MtfA family. In terms of assembly, interacts with Mlc. Zn(2+) serves as cofactor.

It localises to the cytoplasm. In terms of biological role, involved in the modulation of the activity of the glucose-phosphotransferase system (glucose-PTS). Interacts with the transcriptional repressor Mlc, preventing its interaction with DNA and leading to the modulation of expression of genes regulated by Mlc, including ptsG, which encodes the PTS system glucose-specific EIICB component. Its function is as follows. Shows zinc-dependent metallopeptidase activity. The chain is Mlc titration factor A from Escherichia coli O139:H28 (strain E24377A / ETEC).